Consider the following 162-residue polypeptide: Anaerobic nitrite reductase NSHB2 (162 aa).

One can recognise a Globin domain in the interval 16-159; that stretch reads SFSEEQEALV…LVAAIKQEMK (144 aa). The Homodimerization motif lies at 49–53; that stretch reads EVAPS. Heme b is bound by residues serine 59, lysine 73, histidine 77, arginine 100, threonine 104, and histidine 105. The short motif at 112–124 is the Homodimerization element; it reads DAHFEVTRFALLE.

Belongs to the plant globin family. As to quaternary structure, homodimer. Heme b serves as cofactor. In terms of tissue distribution, mainly expressed in germinating seeds, seedlings, roots, flowers and leaves.

The protein resides in the cytoplasm. It is found in the nucleus. It carries out the reaction Fe(III)-heme b-[protein] + nitric oxide + H2O = Fe(II)-heme b-[protein] + nitrite + 2 H(+). Functionally, phytoglobin that reduces nitrite to nitric oxide under anoxic conditions (e.g. during flooding or in waterlogged soil). May not function as an oxygen storage or transport protein. Has an unusually high affinity for O(2) through an hexacoordinate heme iron because of a very low dissociation constant. Promotes tolerance to low potassium K(+) conditions. The polypeptide is Anaerobic nitrite reductase NSHB2 (Oryza sativa subsp. indica (Rice)).